Here is a 468-residue protein sequence, read N- to C-terminus: Bone morphogenetic protein 3 (468 aa).

A signal peptide spans 1–22 (MAGARGLLCLWLGYFCLNLAQG). Residues 23-358 (QRPNLHLPGL…EQTLKKARRK (336 aa)) constitute a propeptide that is removed on maturation. The disordered stretch occupies residues 29–53 (LPGLRETEPSDRATGGSPSPDLRPH). N-linked (GlcNAc...) asparagine glycans are attached at residues asparagine 115, asparagine 139, asparagine 171, and asparagine 216. The disordered stretch occupies residues 314-349 (RKPYKSLQTQPPEKSRNKKKQRKGSHQKGQTLQFDE). Residues 329 to 339 (RNKKKQRKGSH) show a composition bias toward basic residues. The span at 340 to 349 (QKGQTLQFDE) shows a compositional bias: polar residues. Intrachain disulfides connect cysteine 366–cysteine 433, cysteine 395–cysteine 465, and cysteine 399–cysteine 467. Asparagine 459 carries an N-linked (GlcNAc...) asparagine glycan.

Belongs to the TGF-beta family. As to quaternary structure, homodimer; disulfide-linked.

The protein resides in the secreted. In terms of biological role, negatively regulates bone density. Antagonizes the ability of certain osteogenic BMPs to induce osteoprogenitor differentiation and ossification. The sequence is that of Bone morphogenetic protein 3 (Bmp3) from Mus musculus (Mouse).